The following is a 140-amino-acid chain: Actin-depolymerizing factor 10 (140 aa).

Position 6 is a phosphoserine (S6). The region spanning 7 to 139 (GMHVSDECKL…SLDIIKGRVN (133 aa)) is the ADF-H domain.

Belongs to the actin-binding proteins ADF family.

The protein resides in the cytoplasm. It localises to the cytoskeleton. Actin-depolymerizing protein. Severs actin filaments (F-actin) and binds to actin monomers. This is Actin-depolymerizing factor 10 (ADF10) from Arabidopsis thaliana (Mouse-ear cress).